Here is a 683-residue protein sequence, read N- to C-terminus: Dipeptidyl-peptidase 5 (683 aa).

A signal peptide spans 1–19 (MHSLFKQLVFFLVMTLTAA). N-linked (GlcNAc...) asparagine glycosylation is found at N53, N69, N103, N116, N126, and N400. Active-site charge relay system residues include S535, D617, and H649.

It belongs to the peptidase S9C family.

It localises to the secreted. The protein resides in the cytoplasm. Its subcellular location is the nucleus. This chain is Dipeptidyl-peptidase 5, found in Schizosaccharomyces pombe (strain 972 / ATCC 24843) (Fission yeast).